Consider the following 32-residue polypeptide: AFCRFNGQQCTSDGQCCNGRCINAFQGRICIG.

3 disulfide bridges follow: Cys-3-Cys-17, Cys-10-Cys-21, and Cys-16-Cys-30.

Expressed by the venom gland.

The protein resides in the secreted. The chain is U6-ctenitoxin-Pr1a from Phoneutria reidyi (Brazilian Amazonian armed spider).